We begin with the raw amino-acid sequence, 454 residues long: uncharacterized protein (454 aa).

The N-terminal stretch at 1-21 (MKYKTVKSIPLFLLGSIVFTA) is a signal peptide. Cys22 carries the N-palmitoyl cysteine lipid modification. The S-diacylglycerol cysteine moiety is linked to residue Cys22. Over residues 55 to 64 (ASSSSSTTTS) the composition is skewed to low complexity. A disordered region spans residues 55-87 (ASSSSSTTTSNDDNNQKGYFLETNRSTGTYDPN). Polar residues predominate over residues 65–87 (NDDNNQKGYFLETNRSTGTYDPN).

It is found in the cell membrane. This is an uncharacterized protein from Mycoplasma pneumoniae (strain ATCC 29342 / M129 / Subtype 1) (Mycoplasmoides pneumoniae).